The primary structure comprises 81 residues: Keratin-associated protein 19-3 (81 aa).

The protein belongs to the KRTAP type 19 family. In terms of assembly, interacts with hair keratins.

In the hair cortex, hair keratin intermediate filaments are embedded in an interfilamentous matrix, consisting of hair keratin-associated proteins (KRTAP), which are essential for the formation of a rigid and resistant hair shaft through their extensive disulfide bond cross-linking with abundant cysteine residues of hair keratins. The matrix proteins include the high-sulfur and high-glycine-tyrosine keratins. In Homo sapiens (Human), this protein is Keratin-associated protein 19-3 (KRTAP19-3).